The chain runs to 612 residues: Bifunctional lycopene cyclase/phytoene synthase (612 aa).

Residues 1 to 268 (MGWEYAQVHL…IVFGLIACDN (268 aa)) form a lycopene beta-cyclase region. A run of 7 helical transmembrane segments spans residues 3-23 (WEYA…LAAV), 31-51 (LDVF…VKGL), 112-130 (LFFF…MILS), 148-168 (IAGQ…VSSG), 171-191 (GMYM…LWSI), 203-223 (NTAL…TFAL), and 246-266 (IEEA…LIAC). Residues 275 to 612 (TFPEHFPRTK…IRVAWSALNK (338 aa)) form a phytoene synthase region.

In the N-terminal section; belongs to the lycopene beta-cyclase family. The protein in the C-terminal section; belongs to the phytoene/squalene synthase family.

It localises to the membrane. It catalyses the reaction all-trans-lycopene = gamma-carotene. The enzyme catalyses gamma-carotene = all-trans-beta-carotene. The catalysed reaction is 2 (2E,6E,10E)-geranylgeranyl diphosphate = 15-cis-phytoene + 2 diphosphate. It participates in carotenoid biosynthesis; beta-carotene biosynthesis. The protein operates within carotenoid biosynthesis; phytoene biosynthesis; all-trans-phytoene from geranylgeranyl diphosphate: step 1/1. In terms of biological role, bifunctional enzyme; part of the car gene cluster that mediates the biosynthesis of neurosporaxanthin, a carboxylic apocarotenoid acting as an essential protective pigments and leading to orange pigmentation. CarAR catalyzes the first step of the pathway by converting geranylgeranyl diphosphate to phytoene, as well as the later cyclization step that transforms the carB product lycopene into gamma-carotene. CarAR also converts part of gamma-carotene into beta-carotene. Neurosporaxanthin is synthesized from geranyl-geranyl pyrophosphate (GGPP) through several enzymatic activities. Phytoene synthase activity performed by the bifunctional enzyme carAR first produces phytoene from geranyl-geranyl pyrophosphate (GGPP). The phytoene dehydrogenase carB then introduces 4 desaturations to lead to lycopene which is substrate of the carotene cyclase activity of carAR that leads to the production of gamma-carotene. CarB then performs a 5th desaturation reaction to yield torulene. Torulene is the substrate of the dioxidase carT that breaks the molecule, removing five carbon atoms to yield beta-apo-4'-carotenal, whereas the aldehyde dehydrogenase carD mediates the last step by converting beta-apo-4'-carotenal into neurosporaxanthin. The sequence is that of Bifunctional lycopene cyclase/phytoene synthase from Fusarium fujikuroi (Bakanae and foot rot disease fungus).